Here is a 291-residue protein sequence, read N- to C-terminus: Bifunctional protein FolD (291 aa).

Residues 168-170, Thr-195, and Ile-236 contribute to the NADP(+) site; that span reads GRG.

It belongs to the tetrahydrofolate dehydrogenase/cyclohydrolase family. Homodimer.

The catalysed reaction is (6R)-5,10-methylene-5,6,7,8-tetrahydrofolate + NADP(+) = (6R)-5,10-methenyltetrahydrofolate + NADPH. It catalyses the reaction (6R)-5,10-methenyltetrahydrofolate + H2O = (6R)-10-formyltetrahydrofolate + H(+). Its pathway is one-carbon metabolism; tetrahydrofolate interconversion. Catalyzes the oxidation of 5,10-methylenetetrahydrofolate to 5,10-methenyltetrahydrofolate and then the hydrolysis of 5,10-methenyltetrahydrofolate to 10-formyltetrahydrofolate. This is Bifunctional protein FolD from Bifidobacterium longum subsp. infantis (strain ATCC 15697 / DSM 20088 / JCM 1222 / NCTC 11817 / S12).